The following is a 107-amino-acid chain: Large ribosomal subunit protein uL24 (107 aa).

It belongs to the universal ribosomal protein uL24 family. Part of the 50S ribosomal subunit.

Its function is as follows. One of two assembly initiator proteins, it binds directly to the 5'-end of the 23S rRNA, where it nucleates assembly of the 50S subunit. In terms of biological role, one of the proteins that surrounds the polypeptide exit tunnel on the outside of the subunit. In Caldanaerobacter subterraneus subsp. tengcongensis (strain DSM 15242 / JCM 11007 / NBRC 100824 / MB4) (Thermoanaerobacter tengcongensis), this protein is Large ribosomal subunit protein uL24.